A 23-amino-acid polypeptide reads, in one-letter code: Acidic phospholipase A2 CHA-E6b (23 aa).

The protein belongs to the phospholipase A2 family. Group II subfamily. D49 sub-subfamily. Ca(2+) serves as cofactor. Post-translationally, contains 7 disulfide bonds. Expressed by the venom gland.

It is found in the secreted. The catalysed reaction is a 1,2-diacyl-sn-glycero-3-phosphocholine + H2O = a 1-acyl-sn-glycero-3-phosphocholine + a fatty acid + H(+). Snake venom phospholipase A2 (PLA2) that shows high lipolytic (1200 umol/mg/min) and weak ADP-induced platelet aggregation activities. Also shows weak anticoagulant activity (IC(50) of about 1.0 uM). PLA2 catalyzes the calcium-dependent hydrolysis of the 2-acyl groups in 3-sn-phosphoglycerides. The protein is Acidic phospholipase A2 CHA-E6b of Crotalus horridus (Timber rattlesnake).